We begin with the raw amino-acid sequence, 275 residues long: Coagulation factor IX (275 aa).

Residue tyrosine 23 is modified to Sulfotyrosine. Asparagine 25 is a glycosylation site (N-linked (GlcNAc...) asparagine). Threonine 27 is subject to Phosphothreonine. Residue asparagine 35 is glycosylated (N-linked (GlcNAc...) asparagine). O-linked (GalNAc...) threonine glycosylation is present at threonine 47. Residues 49–275 form the Peptidase S1 domain; the sequence is IVGGENAKPG…YTRVSWYVNW (227 aa). Cysteine 74 and cysteine 90 are oxidised to a cystine. The Charge relay system role is filled by histidine 89. Asparagine 96 carries an N-linked (GlcNAc...) asparagine glycan. Glutamate 103, asparagine 105, glutamate 108, glutamate 110, and glutamate 113 together coordinate Ca(2+). Asparagine 128 is a glycosylation site (N-linked (GlcNAc...) asparagine). The active-site Charge relay system is aspartate 137. 2 disulfides stabilise this stretch: cysteine 204–cysteine 218 and cysteine 229–cysteine 257. Residue serine 233 is the Charge relay system of the active site.

This sequence belongs to the peptidase S1 family. In terms of assembly, heterodimer of a light chain and a heavy chain; disulfide-linked. Interacts (inactive and activated) with F11 (activated) in calcium-dependent manner. Interacts with SERPINC1. Post-translationally, activated by factor XIa, which excises the activation peptide. The propeptide can also be removed by snake venom protease. Activated by coagulation factor VIIa-tissue factor (F7-F3) complex in calcium-dependent manner.

Its subcellular location is the secreted. The enzyme catalyses Selective cleavage of Arg-|-Ile bond in factor X to form factor Xa.. Functionally, factor IX is a vitamin K-dependent plasma protein that participates in the intrinsic pathway of blood coagulation by converting factor X to its active form in the presence of Ca(2+) ions, phospholipids, and factor VIIIa. This chain is Coagulation factor IX (F9), found in Oryctolagus cuniculus (Rabbit).